The following is a 295-amino-acid chain: Ent-pimara-9(11),15-diene synthase (295 aa).

This sequence belongs to the terpene synthase family. As to quaternary structure, monomer. A divalent metal cation serves as cofactor.

It catalyses the reaction ent-copalyl diphosphate = ent-pimara-9(11),15-diene + diphosphate. The protein operates within antibiotic biosynthesis. Involved in viguiepinol biosynthesis. Catalyzes the conversion of copalyl diphosphate (ent-CDP) into pimara-9(11),15-diene (PMD). This Streptomyces sp. (strain KO-3988) protein is Ent-pimara-9(11),15-diene synthase.